The primary structure comprises 295 residues: Bifunctional protein FolD (295 aa).

NADP(+) contacts are provided by residues 175–177 (GVS) and Ile243.

Belongs to the tetrahydrofolate dehydrogenase/cyclohydrolase family. In terms of assembly, homodimer.

The catalysed reaction is (6R)-5,10-methylene-5,6,7,8-tetrahydrofolate + NADP(+) = (6R)-5,10-methenyltetrahydrofolate + NADPH. It carries out the reaction (6R)-5,10-methenyltetrahydrofolate + H2O = (6R)-10-formyltetrahydrofolate + H(+). The protein operates within one-carbon metabolism; tetrahydrofolate interconversion. Catalyzes the oxidation of 5,10-methylenetetrahydrofolate to 5,10-methenyltetrahydrofolate and then the hydrolysis of 5,10-methenyltetrahydrofolate to 10-formyltetrahydrofolate. This is Bifunctional protein FolD from Xylella fastidiosa (strain 9a5c).